Here is a 396-residue protein sequence, read N- to C-terminus: Phosphoglycerate kinase (396 aa).

Residues 21–23 (DFN), Arg-36, 59–62 (HLGK), Arg-119, and Arg-156 each bind substrate. ATP contacts are provided by residues Lys-206, Gly-294, Glu-325, and 352-355 (GGDS).

The protein belongs to the phosphoglycerate kinase family. Monomer.

It localises to the cytoplasm. The enzyme catalyses (2R)-3-phosphoglycerate + ATP = (2R)-3-phospho-glyceroyl phosphate + ADP. The protein operates within carbohydrate degradation; glycolysis; pyruvate from D-glyceraldehyde 3-phosphate: step 2/5. The chain is Phosphoglycerate kinase from Listeria monocytogenes serotype 4b (strain CLIP80459).